Reading from the N-terminus, the 180-residue chain is NADH-quinone oxidoreductase subunit I (180 aa).

4Fe-4S ferredoxin-type domains lie at 50–80 and 90–119; these read LTRDPDGEERCVACNLCAVACPVGCISLQKA and EFFRINFSRCIFCGLCEEACPTTAIQLTPD. 8 residues coordinate [4Fe-4S] cluster: Cys60, Cys63, Cys66, Cys70, Cys99, Cys102, Cys105, and Cys109.

It belongs to the complex I 23 kDa subunit family. NDH-1 is composed of 13 different subunits. Subunits NuoA, H, J, K, L, M, N constitute the membrane sector of the complex. Requires [4Fe-4S] cluster as cofactor.

The protein localises to the cell inner membrane. It carries out the reaction a quinone + NADH + 5 H(+)(in) = a quinol + NAD(+) + 4 H(+)(out). Functionally, NDH-1 shuttles electrons from NADH, via FMN and iron-sulfur (Fe-S) centers, to quinones in the respiratory chain. The immediate electron acceptor for the enzyme in this species is believed to be ubiquinone. Couples the redox reaction to proton translocation (for every two electrons transferred, four hydrogen ions are translocated across the cytoplasmic membrane), and thus conserves the redox energy in a proton gradient. This is NADH-quinone oxidoreductase subunit I from Yersinia enterocolitica serotype O:8 / biotype 1B (strain NCTC 13174 / 8081).